We begin with the raw amino-acid sequence, 283 residues long: Pantothenate synthetase (283 aa).

An ATP-binding site is contributed by 30–37 (MGNLHAGH). H37 (proton donor) is an active-site residue. (R)-pantoate is bound at residue Q61. Q61 contributes to the beta-alanine binding site. 149 to 152 (GQKD) serves as a coordination point for ATP. Residue Q155 coordinates (R)-pantoate. ATP is bound by residues V178 and 186 to 189 (LSSR).

This sequence belongs to the pantothenate synthetase family. Homodimer.

The protein resides in the cytoplasm. It catalyses the reaction (R)-pantoate + beta-alanine + ATP = (R)-pantothenate + AMP + diphosphate + H(+). The protein operates within cofactor biosynthesis; (R)-pantothenate biosynthesis; (R)-pantothenate from (R)-pantoate and beta-alanine: step 1/1. Catalyzes the condensation of pantoate with beta-alanine in an ATP-dependent reaction via a pantoyl-adenylate intermediate. The protein is Pantothenate synthetase of Hydrogenovibrio crunogenus (strain DSM 25203 / XCL-2) (Thiomicrospira crunogena).